Reading from the N-terminus, the 432-residue chain is Glutamyl-tRNA reductase (432 aa).

Residues 49–52 (TCNR), Ser-101, 106–108 (EPQ), and Gln-112 each bind substrate. Residue Cys-50 is the Nucleophile of the active site. Residue 181-186 (GAGETI) participates in NADP(+) binding. Positions 408–432 (PEKPGYRHPPVATPIVRTDDANPAP) are disordered.

This sequence belongs to the glutamyl-tRNA reductase family. As to quaternary structure, homodimer.

It carries out the reaction (S)-4-amino-5-oxopentanoate + tRNA(Glu) + NADP(+) = L-glutamyl-tRNA(Glu) + NADPH + H(+). It functions in the pathway porphyrin-containing compound metabolism; protoporphyrin-IX biosynthesis; 5-aminolevulinate from L-glutamyl-tRNA(Glu): step 1/2. In terms of biological role, catalyzes the NADPH-dependent reduction of glutamyl-tRNA(Glu) to glutamate 1-semialdehyde (GSA). The sequence is that of Glutamyl-tRNA reductase from Xanthomonas campestris pv. campestris (strain B100).